Consider the following 194-residue polypeptide: MKIKSVELVKTIYKSNDKYPESLNGEFVFVGRSNVGKSTLLNILTGRNIAKTSKKPGKTASINFYKINNSFYFVDLPGYGYAKVSVEERARWRKIIENYFSKRAWNIKLVFVLIDGRHELQKNDEILLEWLKELELDFAIVMTKMDKLKNSERAKMIRYYKDLYGENYTIIPYSAITREGIDKIYELIEIFGGV.

One can recognise an EngB-type G domain in the interval 23 to 194 (LNGEFVFVGR…YELIEIFGGV (172 aa)). GTP contacts are provided by residues 31 to 38 (GRSNVGKS), 57 to 61 (GKTAS), 75 to 78 (DLPG), 143 to 146 (TKMD), and 173 to 175 (YSA). 2 residues coordinate Mg(2+): Ser38 and Thr59.

The protein belongs to the TRAFAC class TrmE-Era-EngA-EngB-Septin-like GTPase superfamily. EngB GTPase family. Mg(2+) serves as cofactor.

Its function is as follows. Necessary for normal cell division and for the maintenance of normal septation. This is Probable GTP-binding protein EngB from Thermosipho africanus (strain TCF52B).